Consider the following 85-residue polypeptide: UPF0335 protein Plav_2034 (85 aa).

The protein belongs to the UPF0335 family.

This chain is UPF0335 protein Plav_2034, found in Parvibaculum lavamentivorans (strain DS-1 / DSM 13023 / NCIMB 13966).